The primary structure comprises 89 residues: Small ribosomal subunit protein uS15 (89 aa).

This sequence belongs to the universal ribosomal protein uS15 family. As to quaternary structure, part of the 30S ribosomal subunit. Forms a bridge to the 50S subunit in the 70S ribosome, contacting the 23S rRNA.

In terms of biological role, one of the primary rRNA binding proteins, it binds directly to 16S rRNA where it helps nucleate assembly of the platform of the 30S subunit by binding and bridging several RNA helices of the 16S rRNA. Forms an intersubunit bridge (bridge B4) with the 23S rRNA of the 50S subunit in the ribosome. This is Small ribosomal subunit protein uS15 from Corynebacterium kroppenstedtii (strain DSM 44385 / JCM 11950 / CIP 105744 / CCUG 35717).